The following is an 86-amino-acid chain: DNA-directed RNA polymerase subunit omega (86 aa).

It belongs to the RNA polymerase subunit omega family. As to quaternary structure, the RNAP catalytic core consists of 2 alpha, 1 beta, 1 beta' and 1 omega subunit. When a sigma factor is associated with the core the holoenzyme is formed, which can initiate transcription.

It carries out the reaction RNA(n) + a ribonucleoside 5'-triphosphate = RNA(n+1) + diphosphate. Functionally, promotes RNA polymerase assembly. Latches the N- and C-terminal regions of the beta' subunit thereby facilitating its interaction with the beta and alpha subunits. The polypeptide is DNA-directed RNA polymerase subunit omega (Psychrobacter arcticus (strain DSM 17307 / VKM B-2377 / 273-4)).